The sequence spans 204 residues: Thiamine-phosphate synthase (204 aa).

4-amino-2-methyl-5-(diphosphooxymethyl)pyrimidine contacts are provided by residues 32 to 36 (QLRMK) and Asp64. Residues Asp65 and Asp84 each contribute to the Mg(2+) site. Thr103 is a binding site for 4-amino-2-methyl-5-(diphosphooxymethyl)pyrimidine. Residue 129–131 (TTT) coordinates 2-[(2R,5Z)-2-carboxy-4-methylthiazol-5(2H)-ylidene]ethyl phosphate. Residue Lys132 coordinates 4-amino-2-methyl-5-(diphosphooxymethyl)pyrimidine. Gly165 provides a ligand contact to 2-[(2R,5Z)-2-carboxy-4-methylthiazol-5(2H)-ylidene]ethyl phosphate.

Belongs to the thiamine-phosphate synthase family. The cofactor is Mg(2+).

The catalysed reaction is 2-[(2R,5Z)-2-carboxy-4-methylthiazol-5(2H)-ylidene]ethyl phosphate + 4-amino-2-methyl-5-(diphosphooxymethyl)pyrimidine + 2 H(+) = thiamine phosphate + CO2 + diphosphate. It catalyses the reaction 2-(2-carboxy-4-methylthiazol-5-yl)ethyl phosphate + 4-amino-2-methyl-5-(diphosphooxymethyl)pyrimidine + 2 H(+) = thiamine phosphate + CO2 + diphosphate. It carries out the reaction 4-methyl-5-(2-phosphooxyethyl)-thiazole + 4-amino-2-methyl-5-(diphosphooxymethyl)pyrimidine + H(+) = thiamine phosphate + diphosphate. It functions in the pathway cofactor biosynthesis; thiamine diphosphate biosynthesis; thiamine phosphate from 4-amino-2-methyl-5-diphosphomethylpyrimidine and 4-methyl-5-(2-phosphoethyl)-thiazole: step 1/1. Condenses 4-methyl-5-(beta-hydroxyethyl)thiazole monophosphate (THZ-P) and 2-methyl-4-amino-5-hydroxymethyl pyrimidine pyrophosphate (HMP-PP) to form thiamine monophosphate (TMP). This chain is Thiamine-phosphate synthase, found in Bacteroides fragilis (strain ATCC 25285 / DSM 2151 / CCUG 4856 / JCM 11019 / LMG 10263 / NCTC 9343 / Onslow / VPI 2553 / EN-2).